The primary structure comprises 292 residues: Coatomer subunit epsilon-1 (292 aa).

It belongs to the COPE family. As to quaternary structure, oligomeric complex that consists of at least the alpha, beta, beta', gamma, delta, epsilon and zeta subunits.

Its subcellular location is the cytoplasm. It is found in the golgi apparatus membrane. The protein resides in the cytoplasmic vesicle. It localises to the COPI-coated vesicle membrane. Its function is as follows. The coatomer is a cytosolic protein complex that binds to dilysine motifs and reversibly associates with Golgi non-clathrin-coated vesicles, which further mediate biosynthetic protein transport from the ER, via the Golgi up to the trans Golgi network. The coatomer complex is required for budding from Golgi membranes, and is essential for the retrograde Golgi-to-ER transport of dilysine-tagged proteins. The polypeptide is Coatomer subunit epsilon-1 (Arabidopsis thaliana (Mouse-ear cress)).